The following is a 142-amino-acid chain: Large-conductance mechanosensitive channel (142 aa).

3 helical membrane passes run 10–30 (FAVK…GAFG), 40–60 (LIMP…LFIV), and 86–106 (GNFI…FVMV).

This sequence belongs to the MscL family. Homopentamer.

It is found in the cell inner membrane. Its function is as follows. Channel that opens in response to stretch forces in the membrane lipid bilayer. May participate in the regulation of osmotic pressure changes within the cell. This Acidovorax ebreus (strain TPSY) (Diaphorobacter sp. (strain TPSY)) protein is Large-conductance mechanosensitive channel.